The sequence spans 299 residues: Oxygen-dependent coproporphyrinogen-III oxidase (299 aa).

Residue serine 92 participates in substrate binding. A divalent metal cation contacts are provided by histidine 96 and histidine 106. Catalysis depends on histidine 106, which acts as the Proton donor. 108–110 contributes to the substrate binding site; it reads NVR. A divalent metal cation is bound by residues histidine 145 and histidine 175. The tract at residues 240–275 is important for dimerization; sequence YVEFNLVWDRGTLFGLQTGGRTESILMSMPPLVRWE. A substrate-binding site is contributed by 258-260; it reads GGR.

The protein belongs to the aerobic coproporphyrinogen-III oxidase family. Homodimer. A divalent metal cation serves as cofactor.

The protein resides in the cytoplasm. The enzyme catalyses coproporphyrinogen III + O2 + 2 H(+) = protoporphyrinogen IX + 2 CO2 + 2 H2O. The protein operates within porphyrin-containing compound metabolism; protoporphyrin-IX biosynthesis; protoporphyrinogen-IX from coproporphyrinogen-III (O2 route): step 1/1. In terms of biological role, involved in the heme biosynthesis. Catalyzes the aerobic oxidative decarboxylation of propionate groups of rings A and B of coproporphyrinogen-III to yield the vinyl groups in protoporphyrinogen-IX. The sequence is that of Oxygen-dependent coproporphyrinogen-III oxidase from Salmonella newport (strain SL254).